A 1881-amino-acid chain; its full sequence is MAQTLSKISNKENASSGLRPKRFKPHQPIPTWMVRCEPLDHDSRRGRDPVRASPQAKRVRTPTPYPRHLKPAASAVVRSGNNPSHLKPASTDVVRSGPQPLCCEAKDGGVVRSCKTYNLKPAHESKAVAFSLPKTDGPTGNEPEFIAEACPSCALYDTCPNCTSKVINDDGSTDGTIPSWDQIETTPAFLSLLSNTDEEMSADELTNLAAHLRKAFETGSHPANVDYSKDQLQGLLEMAEAAVPPARRQTLPFYQQRLEARRTWREKIFNQPLEEINKILTTSKDRFQRCAAWKVILEKAVLAKEYGEEAYAYAQQALKNINSFDVNLVLKMAAATFIDHIRMMTVDNPDLVSYIPKLIVKLKPLTLKMIIDNHENTKEGWLVTLTSLAELYGMVEVAIDFVPTVVGKLFDLLMKTTSKMYSMFKSVVLATFTSESLDFTNPFWYAIAAILCFLITGAIPHNGKMKIHKNILSNATGIVAGIKAIQALAAMFSTWSNERLVNDLSSRTIALTELNNPTITADIDAVINLQRLAEVLRDEVKSHTLNPLMQPYNPILRNLMSALDKVISCCTRRKAIATKRTAPVAVILTGPPGCGKTTAAFALAKRLSQQKPSIISLDVDHHDTYTGNEVCIIDEFDSSDKVDYANFVVNMVNTNPMVLNCDLIENKGKTFTSKYVIMTSNTETPVKPTSRRAGAFYRRVMIVDVTNNAVDKWKSDNPGKAVPKWCFNKDFSHLSLSLRGTEPYSKEYVLDPTGRNHQSRRAPPPQQITLEQLAQKMVVQHTTNTSEFVTQAGDVPVFGFVCQNNEIDTVYNLLAAVKARYGANFNLYKGMVRTAHENSGCGAHVHVISREDNFRGKAFTVNRSRLESVPHLEGDSFRRSLGVVMSDKDVTTMFYYIKGKVINDQVSLTELPANQHVVTVHTVYDMAWALRRHLKWSGQWQLIKAAYEIMCYPDTAACALRNWMDSTDFSEEHVVTQFIAPGGTIILESCYGARMWATGQRLIRAGGLTEAGGPQGGVRFAGLGARNVPWSEILREFMTLISHIWSQIKGATVVLTALTFYLKRFRPRVEAKGKNKNKGPRKNTGVALTDDEYNDWKQSKAEKNLDLTVKDFLQLRHRAAMGADNTDAVKFRYWYSKKQKIYHDLENFPIIGRGGLKRELIRKGPLRPRGNDFYDEPDDWYSEGVIDGVTHKNAIVSVDDVDGMHKGYAIHIGHGVYISLKHVLTGNARILSEEPKGITISGELATFRLNNILPTAVPVGTNKPIKDPWGNPVSTDWQFKNYNTTSGNIYGACGSSCSLTRQGDCGLPYVDDHGVVVGLHAGSGGDKCPSRKLIVPYVKVDMRIRDTCTKESPTKTHKPTFSYRGLLGKETGEPRTIMKGTRLHVSPAHVDDYEECTHQPASLGAGDPRCPISLTGIMVNNLQPYTEASPGPDTATLNRVSKMLTSHMEGYVPKVHKTEEDSISAFYMLNHDTLCGPYIGARKKDHVKDGVLDKNLLDLLSSKWNRAKLGLALPHEYALGLKDELRPKDKVAVGKRRLIWGCDVGVSTVCAAAFKRVSESIMANHALGFIQVGINMDGPAVEDLFKRLERPKHDRYCVDYSKWDSTQPPKVTSQSIDILRHFTDKSPIVDSACATLKSNPIGIFNGVAFKVAGGLPSGMPLTSIINSLNHCLMVGSAVVKALEDSGVRVTWNIFDSMDLFTYGDDGVYIVPPLISSVMPKVFANLRQFGLKPTRTDKSDAEITPIPADEPVEFLKRTIVRTENGVRALLDRSSIIRQFYYIKAENTENWTVPPKRIDTPSRGQQLYNACLYASQHGEEFYTSKIVPLIERAVKLEGLHIEVPEFHQAVAAYNGYFNGTEGQPNQIAHASGGLGLSGEVFEN.

Polar residues predominate over residues 1 to 16; it reads MAQTLSKISNKENASS. The tract at residues 1–93 is disordered; that stretch reads MAQTLSKISN…SHLKPASTDV (93 aa). Residues 37 to 50 are compositionally biased toward basic and acidic residues; that stretch reads EPLDHDSRRGRDPV. The 157-residue stretch at 564–720 folds into the SF3 helicase domain; sequence DKVISCCTRR…DKWKSDNPGK (157 aa). Residue 590–597 participates in ATP binding; sequence GPPGCGKT. Y1093 bears the O-(5'-phospho-RNA)-tyrosine mark. The region spanning 1188–1341 is the Peptidase C24 domain; the sequence is GVTHKNAIVS…KLIVPYVKVD (154 aa). Catalysis depends on for 3CLpro activity residues H1222, E1243, and C1305. Residues 1593–1718 form the RdRp catalytic domain; sequence HDRYCVDYSK…IVPPLISSVM (126 aa).

In terms of assembly, homodimer. Interacts with NTPase, protein p30 and protease-polymerase p76. As to quaternary structure, interacts with capsid protein VP1 and protease-polymerase p76. Interacts with host IEF4e; this interaction plays a role in translation of viral proteins. Homooligomer. Interacts with Vpg, protein p32 and may interact with capsid protein VP1. Post-translationally, specific enzymatic cleavages in vivo yield mature proteins. Pro-Pol is first autocatalytically cleaved, then processes the whole polyprotein. VPg is uridylylated by the polymerase and is covalently attached to the 5'-end of the polyadenylated genomic and subgenomic RNAs. This uridylylated form acts as a nucleotide-peptide primer for the polymerase.

It localises to the host endoplasmic reticulum membrane. The enzyme catalyses a ribonucleoside 5'-triphosphate + H2O = a ribonucleoside 5'-diphosphate + phosphate + H(+). It catalyses the reaction RNA(n) + a ribonucleoside 5'-triphosphate = RNA(n+1) + diphosphate. The catalysed reaction is Endopeptidase with a preference for cleavage when the P1 position is occupied by Glu-|-Xaa and the P1' position is occupied by Gly-|-Yaa.. Its function is as follows. Together with NTPase and NS4, initiates the formation of the replication complex. Induces the proliferation of the host smooth ER membranes forming long tubular structures. These remodeled membranes probably form the viral factories that contain the replication complex. In terms of biological role, displays NTPase activity, but no helicase activity. Induces the formation of convoluted membranes derived from the host ER. These remodeled membranes probably form the viral factories that contain the replication complex. Together with NS2 and NS4, initiates the formation of the replication complex. Probable key protein responsible for the formation of membrane alterations by the virus. Induces the formation of convoluted membranes derived from the host ER. These remodeled membranes probably form the viral factories that contain the replication complex. Together with NS2 and NTPase, initiates the formation of the replication complex. Functionally, viral genome-linked protein is covalently linked to the 5'-end of the positive-strand, negative-strand genomic RNAs and subgenomic RNA. Acts as a genome-linked replication primer. May recruit ribosome to viral RNA thereby promoting viral proteins translation. Interacts with host translation initiation complex to allow the translation of viral proteins. Its function is as follows. Protease-polymerase p76 processes the polyprotein: Pro-Pol is first released by autocleavage, then all other proteins are cleaved. Cleaves host translation initiation factor eIF4G1, eIF4G2 and PABP1 thereby inducing a shutdown of host protein synthesis. This shutdown may not prevent viral mRNA from being translated since viral Vpg replaces the cap. Also functions as an RNA-directed RNA polymerase, which replicates genomic and antigenomic viral RNA by recognizing specific signals. Also transcribes a subgenomic mRNA by initiating RNA synthesis internally on antigenomic RNA. This sgRNA codes for structural proteins. Catalyzes the covalent attachment VPg with viral RNAs. The sequence is that of Genome polyprotein from Vesicular exanthema of swine virus serotype A48 (isolate Swine/United States/A48/1948) (VESV).